We begin with the raw amino-acid sequence, 285 residues long: Inositol oxygenase (285 aa).

Residues 1–28 (MKVAADPDPSLVSQRDMEPEAAKDKDSF) are disordered. Positions 15–28 (RDMEPEAAKDKDSF) are enriched in basic and acidic residues. Arginine 29 provides a ligand contact to substrate. Serine 33 is subject to Phosphoserine. 85–87 (DES) contacts substrate. Residues histidine 98, histidine 123, and aspartate 124 each contribute to the Fe cation site. Substrate contacts are provided by residues lysine 127 and 141-142 (GD). Fe cation contacts are provided by histidine 194, histidine 220, and aspartate 253. 220 to 221 (HS) is a binding site for substrate.

The protein belongs to the myo-inositol oxygenase family. It depends on Fe cation as a cofactor.

It is found in the cytoplasm. The catalysed reaction is myo-inositol + O2 = D-glucuronate + H2O + H(+). The protein operates within polyol metabolism; myo-inositol degradation into D-glucuronate; D-glucuronate from myo-inositol: step 1/1. This is Inositol oxygenase (MIOX) from Bos taurus (Bovine).